Consider the following 446-residue polypeptide: Casein kinase I homolog 1 (446 aa).

The region spanning tyrosine 12–leucine 274 is the Protein kinase domain. Residues isoleucine 18–isoleucine 26 and lysine 41 each bind ATP. The active-site Proton acceptor is the aspartate 131. The interval lysine 308–serine 430 is disordered. Serine 329 bears the Phosphoserine mark. Over residues proline 332–serine 345 the composition is skewed to polar residues. Positions lysine 346–alanine 355 are enriched in basic and acidic residues. The segment covering asparagine 360–proline 397 has biased composition (polar residues). Basic and acidic residues predominate over residues aspartate 401 to arginine 412.

Belongs to the protein kinase superfamily. CK1 Ser/Thr protein kinase family. Casein kinase I subfamily.

Its subcellular location is the cytoplasm. The catalysed reaction is L-seryl-[protein] + ATP = O-phospho-L-seryl-[protein] + ADP + H(+). It catalyses the reaction L-threonyl-[protein] + ATP = O-phospho-L-threonyl-[protein] + ADP + H(+). Functionally, casein kinases are operationally defined by their preferential utilization of acidic proteins such as caseins as substrates. This is Casein kinase I homolog 1 (cki1) from Schizosaccharomyces pombe (strain 972 / ATCC 24843) (Fission yeast).